The primary structure comprises 101 residues: Small ribosomal subunit protein uS14 (101 aa).

This sequence belongs to the universal ribosomal protein uS14 family. Part of the 30S ribosomal subunit. Contacts proteins S3 and S10.

Its function is as follows. Binds 16S rRNA, required for the assembly of 30S particles and may also be responsible for determining the conformation of the 16S rRNA at the A site. The chain is Small ribosomal subunit protein uS14 from Dinoroseobacter shibae (strain DSM 16493 / NCIMB 14021 / DFL 12).